The sequence spans 66 residues: Beta-toxin Chui2 (66 aa).

The LCN-type CS-alpha/beta domain occupies 1–66; that stretch reads KEGYIVNSYT…VWPLKNKTCN (66 aa). 4 cysteine pairs are disulfide-bonded: Cys-12–Cys-65, Cys-16–Cys-41, Cys-25–Cys-46, and Cys-29–Cys-48. Asn-66 carries the asparagine amide modification.

This sequence belongs to the long (4 C-C) scorpion toxin superfamily. Sodium channel inhibitor family. Beta subfamily. As to expression, expressed by the venom gland.

The protein localises to the secreted. Functionally, beta toxins bind voltage-independently at site-4 of sodium channels (Nav) and shift the voltage of activation toward more negative potentials thereby affecting sodium channel activation and promoting spontaneous and repetitive firing. This chain is Beta-toxin Chui2, found in Centruroides huichol (Scorpion).